The chain runs to 420 residues: Protein disulfide isomerase CRELD1 (420 aa).

Positions 1 to 29 are cleaved as a signal peptide; sequence MAPWPPKGLVPAMLWGLSLFLNLPGPIWL. Over 30 to 362 the chain is Extracellular; that stretch reads QPSPPPQSSP…GFFSEMTEDE (333 aa). The CXXC motif lies at 46–49; it reads CHTC. Residues C46 and C49 are joined by a disulfide bond. N-linked (GlcNAc...) asparagine glycosylation occurs at N79. The EGF-like 1 domain maps to 153 to 193; sequence LPCPGGTERPCGGYGQCEGEGTRGGSGHCDCQAGYGGEACG. Intrachain disulfides connect C155/C169, C163/C181, and C183/C192. An N-linked (GlcNAc...) asparagine glycan is attached at N205. 2 FU repeats span residues 208–256 and 268–315; these read HLVC…GANC and SYEC…EVCP. The short motif at 278–281 is the CXXC element; the sequence is CLGC. Intrachain disulfides connect C278/C281, C309/C321, C314/C330, and C332/C343. The 40-residue stretch at 305-344 folds into the EGF-like 2; calcium-binding domain; sequence DVDECETEVCPGENKQCENTEGGYRCICAEGYKQMEGICV. The chain crosses the membrane as a helical span at residues 363–383; that stretch reads LVVLQQMFFGIIICALATLAA. Residue K384 is a topological domain, cytoplasmic. The chain crosses the membrane as a helical span at residues 385-405; sequence GDLVFTAIFIGAVAAMTGYWL. The Extracellular portion of the chain corresponds to 406-420; that stretch reads SERSDRVLEGFIKGR.

It belongs to the CRELD family. As to expression, highly expressed in fetal lung, liver, kidney, adult heart, brain and skeletal muscle. Weakly expressed in placenta, fetal brain, and adult lung, liver, kidney and pancreas.

The protein localises to the membrane. It catalyses the reaction Catalyzes the rearrangement of -S-S- bonds in proteins.. Functionally, protein disulfide isomerase. Promotes the localization of acetylcholine receptors (AChRs) to the plasma membrane. This Homo sapiens (Human) protein is Protein disulfide isomerase CRELD1 (CRELD1).